Here is a 363-residue protein sequence, read N- to C-terminus: Peptide chain release factor 1 (363 aa).

The residue at position 237 (glutamine 237) is an N5-methylglutamine.

This sequence belongs to the prokaryotic/mitochondrial release factor family. Methylated by PrmC. Methylation increases the termination efficiency of RF1.

The protein resides in the cytoplasm. In terms of biological role, peptide chain release factor 1 directs the termination of translation in response to the peptide chain termination codons UAG and UAA. The polypeptide is Peptide chain release factor 1 (Marinobacter nauticus (strain ATCC 700491 / DSM 11845 / VT8) (Marinobacter aquaeolei)).